Here is a 549-residue protein sequence, read N- to C-terminus: Acetyl-coenzyme A transporter 1 (549 aa).

Over residues 1-12 (MSPTISHKDSSR) the composition is skewed to basic and acidic residues. The tract at residues 1 to 46 (MSPTISHKDSSRQRRPGNFSHSLDMKSGPLPPGGWDDSHLDSAGRE) is disordered. Topologically, residues 1–74 (MSPTISHKDS…PQSFRAELSS (74 aa)) are cytoplasmic. 2 positions are modified to phosphoserine: serine 22 and serine 42. Over residues 36-46 (DDSHLDSAGRE) the composition is skewed to basic and acidic residues. The chain crosses the membrane as a helical span at residues 75-95 (ILLLLFLYVLQGIPLGLAGSI). At 96 to 113 (PLILQSKNVSYTDQAFFS) the chain is on the extracellular side. Asparagine 103 carries N-linked (GlcNAc...) asparagine glycosylation. A helical transmembrane segment spans residues 114 to 134 (FVFWPFSLKLLWAPLVDAVYV). Residues 135-141 (KNFGRRK) are Cytoplasmic-facing. A helical transmembrane segment spans residues 142-162 (SWLVPTQYILGLFMIYLSTQV). The Extracellular portion of the chain corresponds to 163 to 175 (DRLLGNTDDRTPD). Residues 176-196 (VIALTVAFFLFEFLAATQDIA) form a helical membrane-spanning segment. Residues 197 to 217 (VDGWALTMLSRENVGYASTCN) are Cytoplasmic-facing. Residues 218–238 (SVGQTAGYFLGNVLFLALESA) traverse the membrane as a helical segment. At 239–256 (DFCNKYLRFQPQPRGIVT) the chain is on the extracellular side. A helical transmembrane segment spans residues 257–277 (LSDFLFFWGTVFLITTTLVAL). Topologically, residues 278–299 (LKKENEVSVVKEETQGITDTYK) are cytoplasmic. Residues 300–320 (LLFAIIKMPAVLTFCLLILTA) form a helical membrane-spanning segment. Topologically, residues 321 to 343 (KIGFSAADAVTGLKLVEEGVPKE) are extracellular. The chain crosses the membrane as a helical span at residues 344–364 (HLALLAVPMVPLQIILPLIIS). Over 365–378 (KYTAGPQPLNTFYK) the chain is Cytoplasmic. A helical membrane pass occupies residues 379-398 (AMPYRLLLGLEYALLVWWTP). The Extracellular portion of the chain corresponds to 399–404 (KVEHQG). A helical transmembrane segment spans residues 405-425 (GFPIYYYIVVLLSYALHQVTV). The Cytoplasmic segment spans residues 426–508 (YSMYVSIMAF…LGGSCVTALD (83 aa)). The helical transmembrane segment at 509–529 (GYYVESIICVFIGFGWWFFLG) threads the bilayer. Over 530 to 549 (PKFKKLQDEGSSSWKCKRNN) the chain is Extracellular.

It belongs to the SLC33A transporter family. Homodimerizes. Ubiquitous. Detected in heart, brain, placenta, lung, liver, skeletal muscle, kidney and pancreas. With strongest signals in pancreas.

The protein resides in the endoplasmic reticulum membrane. The enzyme catalyses acetyl-CoA(in) = acetyl-CoA(out). Functionally, acetyl-CoA transporter that mediates active acetyl-CoA import through the endoplasmic reticulum (ER) membrane into the ER lumen where specific ER-based acetyl-CoA:lysine acetyltransferases are responsible for the acetylation of ER-based protein substrates, such as BACE1. Necessary for O-acetylation of gangliosides. This chain is Acetyl-coenzyme A transporter 1, found in Homo sapiens (Human).